A 312-amino-acid polypeptide reads, in one-letter code: Homoserine O-succinyltransferase (312 aa).

The Acyl-thioester intermediate role is filled by Cys-142. Positions 163 and 192 each coordinate substrate. His-235 acts as the Proton acceptor in catalysis. Residue Glu-237 is part of the active site. Arg-249 provides a ligand contact to substrate.

It belongs to the MetA family.

It is found in the cytoplasm. It carries out the reaction L-homoserine + succinyl-CoA = O-succinyl-L-homoserine + CoA. The protein operates within amino-acid biosynthesis; L-methionine biosynthesis via de novo pathway; O-succinyl-L-homoserine from L-homoserine: step 1/1. Transfers a succinyl group from succinyl-CoA to L-homoserine, forming succinyl-L-homoserine. The chain is Homoserine O-succinyltransferase from Alteromonas mediterranea (strain DSM 17117 / CIP 110805 / LMG 28347 / Deep ecotype).